The chain runs to 229 residues: Prolactin (229 aa).

The first 30 residues, methionine 1–serine 30, serve as a signal peptide directing secretion. Cysteine 34 and cysteine 41 are disulfide-bonded. Position 56 is a phosphoserine (serine 56). A glycan (N-linked (GlcNAc...) asparagine; partial) is linked at asparagine 61. Phosphoserine is present on residues serine 64 and serine 120. 2 disulfides stabilise this stretch: cysteine 88/cysteine 204 and cysteine 221/cysteine 229.

The protein belongs to the somatotropin/prolactin family. Interacts with PRLR.

It is found in the secreted. Its function is as follows. Prolactin acts primarily on the mammary gland by promoting lactation. This is Prolactin (PRL) from Equus caballus (Horse).